A 1200-amino-acid polypeptide reads, in one-letter code: uncharacterized protein (1200 aa).

5 disordered regions span residues S282 to S302, L323 to S372, S392 to L491, R510 to A568, and S1056 to L1200. The span at A420–S435 shows a compositional bias: low complexity. Positions T437–G448 are enriched in basic and acidic residues. Polar residues predominate over residues G518–P527. Basic and acidic residues predominate over residues E1137 to L1153. Low complexity predominate over residues R1160–R1171. Over residues G1175–L1200 the composition is skewed to polar residues.

This is an uncharacterized protein from Homo sapiens (Human).